Consider the following 151-residue polypeptide: Large ribosomal subunit protein uL13 (151 aa).

This sequence belongs to the universal ribosomal protein uL13 family. Part of the 50S ribosomal subunit.

In terms of biological role, this protein is one of the early assembly proteins of the 50S ribosomal subunit, although it is not seen to bind rRNA by itself. It is important during the early stages of 50S assembly. The chain is Large ribosomal subunit protein uL13 from Synechococcus elongatus (strain ATCC 33912 / PCC 7942 / FACHB-805) (Anacystis nidulans R2).